Consider the following 159-residue polypeptide: 2-C-methyl-D-erythritol 2,4-cyclodiphosphate synthase (159 aa).

A divalent metal cation-binding residues include Asp-8 and His-10. 4-CDP-2-C-methyl-D-erythritol 2-phosphate contacts are provided by residues 8–10 (DVH) and 34–35 (HS). His-42 is a binding site for a divalent metal cation. Residues 56-58 (DIG), 61-65 (FPDTD), 100-106 (AQEPKMA), 132-135 (TTTE), Phe-139, and Arg-142 contribute to the 4-CDP-2-C-methyl-D-erythritol 2-phosphate site.

Belongs to the IspF family. As to quaternary structure, homotrimer. A divalent metal cation is required as a cofactor.

The catalysed reaction is 4-CDP-2-C-methyl-D-erythritol 2-phosphate = 2-C-methyl-D-erythritol 2,4-cyclic diphosphate + CMP. It functions in the pathway isoprenoid biosynthesis; isopentenyl diphosphate biosynthesis via DXP pathway; isopentenyl diphosphate from 1-deoxy-D-xylulose 5-phosphate: step 4/6. Involved in the biosynthesis of isopentenyl diphosphate (IPP) and dimethylallyl diphosphate (DMAPP), two major building blocks of isoprenoid compounds. Catalyzes the conversion of 4-diphosphocytidyl-2-C-methyl-D-erythritol 2-phosphate (CDP-ME2P) to 2-C-methyl-D-erythritol 2,4-cyclodiphosphate (ME-CPP) with a corresponding release of cytidine 5-monophosphate (CMP). In Alkaliphilus metalliredigens (strain QYMF), this protein is 2-C-methyl-D-erythritol 2,4-cyclodiphosphate synthase.